The sequence spans 122 residues: Large ribosomal subunit protein uL14c (122 aa).

It belongs to the universal ribosomal protein uL14 family. As to quaternary structure, part of the 50S ribosomal subunit.

It localises to the plastid. The protein localises to the chloroplast. Functionally, binds to 23S rRNA. This Staurastrum punctulatum (Green alga) protein is Large ribosomal subunit protein uL14c.